The chain runs to 131 residues: MATVPTRSGSPRQLTTKQTGDAWEVQARRWLEGKGLRFVAANVNERGGEIDLIMREGRTTVFVEVRYRRSVLYGGAAASVTRSKQHKLLQTARLWLARHNGSFDTVDCRFDVVAFTGNEVEWIKDAFNDHS.

Residues 1–19 (MATVPTRSGSPRQLTTKQT) are compositionally biased toward polar residues. Residues 1-20 (MATVPTRSGSPRQLTTKQTG) are disordered.

This sequence belongs to the UPF0102 family.

In Escherichia coli O8 (strain IAI1), this protein is UPF0102 protein YraN.